The following is a 689-amino-acid chain: Pentatricopeptide repeat-containing protein At1g71460, chloroplastic (689 aa).

Residues 1–49 (MEVVSSLGIRDLPASLSVTTSLNHRPHRSDKDGAPAKSPIRPSRTRRPS) constitute a chloroplast transit peptide. Residues 16 to 68 (LSVTTSLNHRPHRSDKDGAPAKSPIRPSRTRRPSTSPAKKPKPFRERDAFPSS) form a disordered region. The segment covering 38-52 (SPIRPSRTRRPSTSP) has biased composition (low complexity). PPR repeat units follow at residues 75 to 109 (NPYI…GIPV), 110 to 144 (NATT…GLES), 145 to 175 (NEFL…STSS), 176 to 212 (NVYS…GVDL), 213 to 247 (NVYS…GLFN), 248 to 282 (SVFL…DIVV), 283 to 309 (WGAM…MISE), 315 to 350 (NSVI…NYVE), 351 to 381 (QPFV…SKQR), 382 to 416 (NAIS…GFRP), 417 to 451 (DVVT…LFLP), 452 to 482 (NVSL…LEQR), 483 to 517 (NVKA…KHRP), 518 to 552 (DSVT…EFES), 553 to 583 (IPFV…VAVK), 584 to 618 (GSLT…GFTP), 619 to 649 (NTFT…MLRM), and 655 to 689 (SEEH…SLQT).

The protein belongs to the PPR family. PCMP-A subfamily.

It localises to the plastid. The protein resides in the chloroplast. The protein is Pentatricopeptide repeat-containing protein At1g71460, chloroplastic (PCMP-A3) of Arabidopsis thaliana (Mouse-ear cress).